The chain runs to 549 residues: OBERON-like protein (549 aa).

The disordered stretch occupies residues 1–56 (MLPPRQQPRPGGLQTSLSLVSPDACGSPNPQERGSTSDQARDSPSESASSRETWPT). 2 stretches are compositionally biased toward polar residues: residues 28–38 (PNPQERGSTSD) and 45–56 (SESASSRETWPT). Residues 224 to 288 (LCMCVICYKF…LFRCHACSRT (65 aa)) form a PHD-type zinc finger. Residues 394–520 (VQEAIRKMEA…YLFEKIKLQE (127 aa)) are a coiled coil. The disordered stretch occupies residues 519 to 549 (QESSRASQSSAGGNDPSQMMYSKIQDLIKNM). Over residues 521–538 (SSRASQSSAGGNDPSQMM) the composition is skewed to polar residues.

In terms of assembly, self-interacts and probably forms heteromers. Binds to VPg of pea seed borne mosaic virus (PSbMV), turnip mosaic virus (TuMV) and lettuce mosaic virus (LMV), but not with VPg of tobacco etch virus (TEV), cowpea mosaic virus (CPMV), tomato black ring virus (TBRV) and grapevine fan leaf virus (GFLV).

It is found in the nucleus. Its function is as follows. Required for the maintenance and/or establishment of both the shoot and root meristems, probably by controlling the expression of the meristem genes and of genes required for auxin responses. Involved in the development of the basal pole and in auxin-mediated root and vascular development in the embryo. Confers sensitivity to turnip mosaic virus (TuMV) probably by promoting viral movement and multiplication via interaction with TuMV VPg. The chain is OBERON-like protein (PVIP) from Nicotiana benthamiana.